Reading from the N-terminus, the 157-residue chain is MAFTLEDMTEEEFEAFRGMSVQNFAKQNITSGTWTEKEAFEKSEQAYENMIPNGRDSSNHYFWNITNDQGERMGWLWLYADPLHPQKEAFIYSFGLYEAFRGKGLAQLALQTLDERARELGAERLALHVFAHNETAVYLYQKMGYAMTNIRMRKQLC.

One can recognise an N-acetyltransferase domain in the interval 3–157 (FTLEDMTEEE…TNIRMRKQLC (155 aa)).

The protein belongs to the acetyltransferase family.

This is an uncharacterized protein from Bacillus subtilis (strain 168).